Consider the following 163-residue polypeptide: Lysosomal enzyme trafficking factor (163 aa).

A run of 2 helical transmembrane segments spans residues 40–60 (MGWI…YYVF) and 98–118 (LPFW…FLFL).

The protein belongs to the LYSET family. Interacts with GNPTAB; this interaction is important for proper localization of GNPTAB in Golgi stacks. Interacts with MBTPS1.

The protein resides in the golgi apparatus membrane. Required for mannose-6-phosphate-dependent trafficking of lysosomal enzymes. LYSET bridges GlcNAc-1-phosphate transferase (GNPTAB), to the membrane-bound transcription factor site-1 protease (MBTPS1), thus allowing proteolytic activation of the GNPTAB. GNPTAB is involved in the regulation of M6P-dependent Golgi-to-lysosome trafficking of lysosomal enzymes. LYSET is thus an essential factor for maturation and delivery of lysosomal hydrolases. In terms of biological role, (Microbial infection) Essential for infection by muliple viruses, including SARS-CoV-2, that utilize activated cathepsins for entry after M6P-dependent lysosomal transport. The protein is Lysosomal enzyme trafficking factor of Homo sapiens (Human).